The chain runs to 300 residues: Ubiquitin thioesterase otu2 (300 aa).

Disordered regions lie at residues 23–73 (RKQL…QQED) and 89–141 (TAEK…SEKM). The span at 48-61 (LSQKHATERQKLDK) shows a compositional bias: basic and acidic residues. The segment covering 62–71 (GDEETNETQQ) has biased composition (acidic residues). Residues 89 to 109 (TAEKSSVQSSLNTKENTPQQP) are compositionally biased toward polar residues. Positions 115-141 (RQKERLERRKAEMKKMSEQAELESEKM) are enriched in basic and acidic residues. An OTU domain is found at 161-298 (LVAVDIPADG…GAHYNSLLYR (138 aa)).

It localises to the cytoplasm. It carries out the reaction Thiol-dependent hydrolysis of ester, thioester, amide, peptide and isopeptide bonds formed by the C-terminal Gly of ubiquitin (a 76-residue protein attached to proteins as an intracellular targeting signal).. In terms of biological role, hydrolase that can remove conjugated ubiquitin from proteins and may therefore play an important regulatory role at the level of protein turnover by preventing degradation. The protein is Ubiquitin thioesterase otu2 (otu2) of Schizosaccharomyces pombe (strain 972 / ATCC 24843) (Fission yeast).